The sequence spans 185 residues: Casparian strip membrane protein 2 (185 aa).

Over 1-25 (MKAVSIEAGEGSKAKRVHGVNRGIS) the chain is Cytoplasmic. The helical transmembrane segment at 26–46 (VFDLVLRIVALVGTLASAVAM) threads the bilayer. Topologically, residues 47-73 (GTADQALSFSTQIVNFEAQYDDIDAFK) are extracellular. A helical membrane pass occupies residues 74–94 (FFVVSNSITCVYLALSIPISI). Residues 95–106 (FHIIRSRAGKSR) are Cytoplasmic-facing. A helical membrane pass occupies residues 107–127 (VLLIVLDAIMLVFLTSGASAA). The Extracellular segment spans residues 128–160 (AAIVYLAHNGNTSTNWFSICQQYTDFCQRSAGS). An N-linked (GlcNAc...) asparagine glycan is attached at asparagine 138. Residues 161 to 181 (LIGSFGAMALMVLLIILSSIA) form a helical membrane-spanning segment. The Cytoplasmic portion of the chain corresponds to 182–185 (LSRR).

Belongs to the Casparian strip membrane proteins (CASP) family. In terms of assembly, homodimer and heterodimers.

It is found in the cell membrane. In terms of biological role, regulates membrane-cell wall junctions and localized cell wall deposition. Required for establishment of the Casparian strip membrane domain (CSD) and the subsequent formation of Casparian strips, a cell wall modification of the root endodermis that determines an apoplastic barrier between the intraorganismal apoplasm and the extraorganismal apoplasm and prevents lateral diffusion. This Solanum demissum (Wild potato) protein is Casparian strip membrane protein 2.